A 526-amino-acid chain; its full sequence is Trigger factor (526 aa).

In terms of domain architecture, PPIase FKBP-type spans 162–243; it reads GDFVSIDLSA…LGSVKERELP (82 aa). The segment covering 425-460 has biased composition (basic and acidic residues); sequence DTDGADVDPKEYFGDVEAEGDKADKAETDKAEEKPK. A disordered region spans residues 425-526; the sequence is DTDGADVDPK…AKKAAEKKED (102 aa). Residues 461–517 show a composition bias toward basic residues; sequence KAPAKKSTTKKSTAKKSTAKKSTAKKSTAKKSTAKKSTTKKATKSTAKKSTAKKTTA.

This sequence belongs to the FKBP-type PPIase family. Tig subfamily.

It localises to the cytoplasm. The enzyme catalyses [protein]-peptidylproline (omega=180) = [protein]-peptidylproline (omega=0). Its function is as follows. Involved in protein export. Acts as a chaperone by maintaining the newly synthesized protein in an open conformation. Functions as a peptidyl-prolyl cis-trans isomerase. The chain is Trigger factor from Corynebacterium jeikeium (strain K411).